The sequence spans 577 residues: PTS system lactose-specific EIICB component (577 aa).

The PTS EIIC type-3 domain maps to 4–405; that stretch reads VFDKLKPVFE…VLDVAIYFPF (402 aa). A run of 9 helical transmembrane segments spans residues 27–47, 63–83, 100–120, 133–153, 176–196, 219–239, 280–300, 326–346, and 386–406; these read GFIA…VAYV, LMVA…GTTA, INPV…SILP, QGLI…YVCI, LIPM…FKAA, YLGL…GVQG, VMNF…LFAA, FGMP…TPIV, and LAFV…FPFI. A PTS EIIB type-3 domain is found at 476–577; sequence EVDVLVLCAG…MALDFVESNL (102 aa). Cysteine 483 (phosphocysteine intermediate; for EIIB activity) is an active-site residue. Cysteine 483 bears the Phosphocysteine; by EIIA mark.

The protein resides in the cell membrane. It catalyses the reaction lactose(out) + N(pros)-phospho-L-histidyl-[protein] = lactose 6-phosphate(in) + L-histidyl-[protein]. Functionally, the phosphoenolpyruvate-dependent sugar phosphotransferase system (sugar PTS), a major carbohydrate active transport system, catalyzes the phosphorylation of incoming sugar substrates concomitantly with their translocation across the cell membrane. The enzyme II LacEF PTS system is involved in lactose transport. In Lacticaseibacillus casei (Lactobacillus casei), this protein is PTS system lactose-specific EIICB component.